A 213-amino-acid chain; its full sequence is Probable chemoreceptor glutamine deamidase CheD (213 aa).

A compositionally biased stretch (basic residues) spans 1 to 12 (MNRHRPHSHRSK). Residues 1 to 25 (MNRHRPHSHRSKPASTQDQPDSVRR) form a disordered region.

This sequence belongs to the CheD family.

It carries out the reaction L-glutaminyl-[protein] + H2O = L-glutamyl-[protein] + NH4(+). Probably deamidates glutamine residues to glutamate on methyl-accepting chemotaxis receptors (MCPs), playing an important role in chemotaxis. The protein is Probable chemoreceptor glutamine deamidase CheD of Rhodopseudomonas palustris (strain BisA53).